A 357-amino-acid chain; its full sequence is MPKPPRSTQILSCNAPNGKPKTQHPSARAKVKRTPVNTRSIAEIKKALHPRNVHINGYDFNALIKAFPRLNAFVRPTSFGGLSIDFADPEAVKTLNTALLKHHYGIDFWDIPKGALCPPIPGRVDYLHYLADLLAEGDHHLVMDRVSVLDIGTGANGIYPILGCQVFGWHFVASDINSISLANVQGIIAQNPALHGRLNLRLQGDESAIFKGVIQPQERFELTLCNPPFHASLAEAAEGSLRKVRNLQLNRGRTAKPVAKLNFGGQGAELWCQGGEPQFLATMIDESQAFADQCLWFTSLVSKKENLKPCYQALAKLAVDTVKTIEMQQGNKMTRILAWSFQSAAKRKIWRNAHLSD.

Polar residues predominate over residues 1–15 (MPKPPRSTQILSCNA). Residues 1–33 (MPKPPRSTQILSCNAPNGKPKTQHPSARAKVKR) form a disordered region.

Belongs to the methyltransferase superfamily. METTL16/RlmF family.

It localises to the cytoplasm. The catalysed reaction is adenosine(1618) in 23S rRNA + S-adenosyl-L-methionine = N(6)-methyladenosine(1618) in 23S rRNA + S-adenosyl-L-homocysteine + H(+). Its function is as follows. Specifically methylates the adenine in position 1618 of 23S rRNA. The sequence is that of Ribosomal RNA large subunit methyltransferase F from Shewanella putrefaciens (strain CN-32 / ATCC BAA-453).